The following is a 303-amino-acid chain: Dihydroorotate dehydrogenase B (NAD(+)), catalytic subunit (303 aa).

FMN is bound by residues Ser-21 and 45–46; that span reads KG. Residues Lys-45 and 69–73 each bind substrate; that span reads NAVGL. Residues Asn-99 and Asn-127 each contribute to the FMN site. Asn-127 is a binding site for substrate. Catalysis depends on Cys-130, which acts as the Nucleophile. FMN-binding residues include Lys-165 and Ile-191. Residue 192 to 193 participates in substrate binding; the sequence is NT. FMN is bound by residues Gly-217, 243–244, and 265–266; these read GG and GT.

This sequence belongs to the dihydroorotate dehydrogenase family. Type 1 subfamily. Heterotetramer of 2 PyrK and 2 PyrD type B subunits. FMN is required as a cofactor.

It localises to the cytoplasm. The enzyme catalyses (S)-dihydroorotate + NAD(+) = orotate + NADH + H(+). It participates in pyrimidine metabolism; UMP biosynthesis via de novo pathway; orotate from (S)-dihydroorotate (NAD(+) route): step 1/1. In terms of biological role, catalyzes the conversion of dihydroorotate to orotate with NAD(+) as electron acceptor. This Bacteroides fragilis (strain ATCC 25285 / DSM 2151 / CCUG 4856 / JCM 11019 / LMG 10263 / NCTC 9343 / Onslow / VPI 2553 / EN-2) protein is Dihydroorotate dehydrogenase B (NAD(+)), catalytic subunit (pyrD).